A 239-amino-acid chain; its full sequence is Tetraspanin-9 (239 aa).

The Cytoplasmic segment spans residues 1-12 (MARGCLCCVKYM). A helical transmembrane segment spans residues 13 to 33 (LFLFNLLFWLGGCGLLGVGVW). Residues 34–55 (LSVSQGSFATLSPSFPSISAAN) lie on the Extracellular side of the membrane. The helical transmembrane segment at 56 to 76 (LIITLGAVIMVTGFLGCLGAI) threads the bilayer. Over 77–85 (KENKCLLLS) the chain is Cytoplasmic. A helical transmembrane segment spans residues 86-106 (FFITLLVILLAELILLILFFV). The Extracellular portion of the chain corresponds to 107–203 (YTDNVSENAR…VEEWLDDNKH (97 aa)). Asn110 and Asn180 each carry an N-linked (GlcNAc...) asparagine glycan. The helical transmembrane segment at 204-224 (LLGTIAMCVLVIQLLGMAFSM) threads the bilayer. The Cytoplasmic segment spans residues 225 to 239 (TLYQQIHRSGKKYEA).

This sequence belongs to the tetraspanin (TM4SF) family.

The protein resides in the membrane. This chain is Tetraspanin-9 (tspan9), found in Salmo salar (Atlantic salmon).